A 206-amino-acid polypeptide reads, in one-letter code: Two-component response regulator ARR15 (206 aa).

In terms of domain architecture, Response regulatory spans 19-146; it reads HVLAVDDSFV…DVKRLKELIM (128 aa). Aspartate 79 is subject to 4-aspartylphosphate. Residues 151-206 are disordered; the sequence is AEEGKTKKLSPKRILQNDIDSSPSSSSTSSSSSSHDVSSLDDDTPSSKRIKLESRG. Residues 168–187 are compositionally biased toward low complexity; sequence DIDSSPSSSSTSSSSSSHDV.

The protein belongs to the ARR family. Type-A subfamily. Two-component system major event consists of a His-to-Asp phosphorelay between a sensor histidine kinase (HK) and a response regulator (RR). In plants, the His-to-Asp phosphorelay involves an additional intermediate named Histidine-containing phosphotransfer protein (HPt). This multistep phosphorelay consists of a His-Asp-His-Asp sequential transfer of a phosphate group between first a His and an Asp of the HK protein, followed by the transfer to a conserved His of the HPt protein and finally the transfer to an Asp in the receiver domain of the RR protein.

The protein localises to the nucleus. Its function is as follows. Functions as a response regulator involved in His-to-Asp phosphorelay signal transduction system. Phosphorylation of the Asp residue in the receiver domain activates the ability of the protein to promote the transcription of target genes. Type-A response regulators seem to act as negative regulators of the cytokinin signaling. The polypeptide is Two-component response regulator ARR15 (ARR15) (Arabidopsis thaliana (Mouse-ear cress)).